Here is a 375-residue protein sequence, read N- to C-terminus: GDP-mannose transporter GONST2 (375 aa).

9 helical membrane passes run 79-99 (LVSG…NKIV), 112-132 (MLYQ…SGVV), 141-161 (LIRV…SGMY), 165-185 (YINV…TGIG), 199-219 (WAAM…DLTF), 262-282 (MVLL…ILLG), 300-320 (VVAT…MWFL), 327-347 (TYSL…LVLF), and 349-369 (VPLS…GVVF).

Belongs to the nucleotide-sugar transporter family. GDP-Mannose:GMP antiporter (GMA) (TC 2.A.7.13) subfamily. As to expression, expressed in rosette leaves, stems, flowers and siliques.

It is found in the golgi apparatus membrane. Functionally, GDP-mannose transporter that may be involved in the import of GDP-mannose from the cytoplasm into the Golgi lumen. This chain is GDP-mannose transporter GONST2, found in Arabidopsis thaliana (Mouse-ear cress).